A 169-amino-acid chain; its full sequence is tRNA (cytidine(56)-2'-O)-methyltransferase (169 aa).

S-adenosyl-L-methionine contacts are provided by residues Leu-77, 103–107, and 121–128; these read GSEKV and IGNQPHSE.

The protein belongs to the aTrm56 family. As to quaternary structure, homodimer.

The protein resides in the cytoplasm. The catalysed reaction is cytidine(56) in tRNA + S-adenosyl-L-methionine = 2'-O-methylcytidine(56) in tRNA + S-adenosyl-L-homocysteine + H(+). Functionally, specifically catalyzes the AdoMet-dependent 2'-O-ribose methylation of cytidine at position 56 in tRNAs. The polypeptide is tRNA (cytidine(56)-2'-O)-methyltransferase (Sulfurisphaera tokodaii (strain DSM 16993 / JCM 10545 / NBRC 100140 / 7) (Sulfolobus tokodaii)).